Consider the following 324-residue polypeptide: G patch domain-containing protein 4 (324 aa).

Disordered stretches follow at residues 1–30 (MSASSVKKSQGMKFAEEQMHKHGWKEGKGL) and 123–324 (LSGG…NKSE). Positions 11-57 (GMKFAEEQMHKHGWKEGKGLGRRENGICEAIKVKVKCDHAGVGHNSA) constitute a G-patch domain. Over residues 14 to 30 (FAEEQMHKHGWKEGKGL) the composition is skewed to basic and acidic residues. The span at 131–141 (KEPSSSESSDS) shows a compositional bias: low complexity. Positions 186–215 (SRLEEQEREFLAKYGKKEQKNKERDEKLER) are enriched in basic and acidic residues. Residues 244-253 (HKKKKKKRKR) are compositionally biased toward basic residues. Residues 254-270 (ADSERKEESQENGHEEE) are compositionally biased toward basic and acidic residues. Polar residues predominate over residues 296-309 (PSTQEEQPTESSDF). A compositionally biased stretch (basic residues) spans 312-324 (KPKKKKKKKNKSE).

The chain is G patch domain-containing protein 4 (gpatch4) from Xenopus laevis (African clawed frog).